Reading from the N-terminus, the 228-residue chain is Biopolymer transport protein exbB1 (228 aa).

3 consecutive transmembrane segments (helical) span residues 11–31, 116–136, and 158–178; these read LGLM…LLAE, LTLI…LGLI, and LGVA…AVAG.

Belongs to the ExbB/TolQ family. The accessory proteins ExbB and ExbD seem to form a complex with TonB.

The protein localises to the cell inner membrane. Involved in the TonB-dependent energy-dependent transport of various receptor-bound substrates. Protects ExbD from proteolytic degradation and functionally stabilizes TonB. The polypeptide is Biopolymer transport protein exbB1 (exbB1) (Vibrio cholerae serotype O1 (strain ATCC 39315 / El Tor Inaba N16961)).